A 458-amino-acid polypeptide reads, in one-letter code: Argininosuccinate lyase (458 aa).

It belongs to the lyase 1 family. Argininosuccinate lyase subfamily.

It localises to the cytoplasm. It carries out the reaction 2-(N(omega)-L-arginino)succinate = fumarate + L-arginine. It participates in amino-acid biosynthesis; L-arginine biosynthesis; L-arginine from L-ornithine and carbamoyl phosphate: step 3/3. This is Argininosuccinate lyase from Glaesserella parasuis serovar 5 (strain SH0165) (Haemophilus parasuis).